The sequence spans 59 residues: Large ribosomal subunit protein uL30 (59 aa).

Belongs to the universal ribosomal protein uL30 family. In terms of assembly, part of the 50S ribosomal subunit.

This Rhodococcus erythropolis (strain PR4 / NBRC 100887) protein is Large ribosomal subunit protein uL30.